A 357-amino-acid chain; its full sequence is MAEITAAMVKELRESTGAGMMDCKNALSETNGDFDKAVQLLREKGLGKAAKKADRLAAEGLVSVKVSDDFTSATVSEINSETDFVAKNDQFIALTKDTTAHIQSNSLQSVEELHSSIINGVKFEEYLKSQIATIGENLVVRRFATLKAGANGVVNGYIHTNGRVGVVIAAACDSAEVASKSRDLLRQICMHIAAMRPSYLSYEDLDMTFVENEYKALVAELEKENEERRRLKDPNKPEHKIPQFASRKQLSDAILKEAEEKIKEELKAQGKPEKIWDNIIPGKMNSFIADNSQLDSKLTLMGQFYVMDDKKTVEQVIAEKEKEFGGKIKIVEFICFEVGEGLEKKTEDFAAEVAAQL.

Positions 82-85 are involved in Mg(2+) ion dislocation from EF-Tu; it reads TDFV.

It belongs to the EF-Ts family.

The protein localises to the cytoplasm. Associates with the EF-Tu.GDP complex and induces the exchange of GDP to GTP. It remains bound to the aminoacyl-tRNA.EF-Tu.GTP complex up to the GTP hydrolysis stage on the ribosome. This chain is Elongation factor Ts, found in Campylobacter jejuni subsp. jejuni serotype O:6 (strain 81116 / NCTC 11828).